The sequence spans 296 residues: Outer surface protein B (296 aa).

A signal peptide spans 1-15 (MRLLIGFALALALIG). C16 carries N-palmitoyl cysteine lipidation. A lipid anchor (S-diacylglycerol cysteine) is attached at C16. Residues 25-51 (GSQKENDLNLEDSSKKSHQNAKQDLPA) are disordered. Residues 28 to 39 (KENDLNLEDSSK) are compositionally biased toward basic and acidic residues.

Its subcellular location is the cell outer membrane. The chain is Outer surface protein B (ospB) from Borreliella burgdorferi (strain ATCC 35210 / DSM 4680 / CIP 102532 / B31) (Borrelia burgdorferi).